The following is a 260-amino-acid chain: Small ribosomal subunit protein eS1 (260 aa).

K30 carries the N6-acetyllysine; alternate modification. K30 is covalently cross-linked (Glycyl lysine isopeptide (Lys-Gly) (interchain with G-Cter in SUMO2); alternate). N6-acetyllysine is present on K52. ADP-ribosyltyrosine is present on Y151. Residues 228 to 260 are disordered; the sequence is HGEGSSSGKATGDETGAKVERADGYEPPVQESV. A phosphoserine mark is found at S232 and S233. Residues 238-251 are compositionally biased toward basic and acidic residues; sequence TGDETGAKVERADG. K245 is modified (N6-acetyllysine; alternate). K245 is covalently cross-linked (Glycyl lysine isopeptide (Lys-Gly) (interchain with G-Cter in SUMO2); alternate). Y252 carries the post-translational modification Phosphotyrosine. At S259 the chain carries Phosphoserine.

The protein belongs to the eukaryotic ribosomal protein eS1 family. In terms of assembly, component of the small ribosomal subunit. Mature ribosomes consist of a small (40S) and a large (60S) subunit. The 40S subunit contains about 33 different proteins and 1 molecule of RNA (18S). The 60S subunit contains about 49 different proteins and 3 molecules of RNA (28S, 5.8S and 5S). Identified in a IGF2BP1-dependent mRNP granule complex containing untranslated mRNAs. Binds with high affinity to IPO4. Interacts with DDIT3. Part of the small subunit (SSU) processome, composed of more than 70 proteins and the RNA chaperone small nucleolar RNA (snoRNA) U3. In terms of processing, ADP-ribosylated at Tyr-151 by PARP1 in presence of HPF1.

Its subcellular location is the cytoplasm. It localises to the nucleus. The protein localises to the nucleolus. Functionally, component of the small ribosomal subunit. The ribosome is a large ribonucleoprotein complex responsible for the synthesis of proteins in the cell. Part of the small subunit (SSU) processome, first precursor of the small eukaryotic ribosomal subunit. During the assembly of the SSU processome in the nucleolus, many ribosome biogenesis factors, an RNA chaperone and ribosomal proteins associate with the nascent pre-rRNA and work in concert to generate RNA folding, modifications, rearrangements and cleavage as well as targeted degradation of pre-ribosomal RNA by the RNA exosome. May play a role during erythropoiesis through regulation of transcription factor DDIT3. The sequence is that of Small ribosomal subunit protein eS1 from Felis catus (Cat).